A 505-amino-acid polypeptide reads, in one-letter code: COMPASS component BRE2 (505 aa).

A B30.2/SPRY domain is found at 70 to 295; it reads SANPFFTILG…LKQETTNKEF (226 aa). At serine 227 the chain carries Phosphoserine. The disordered stretch occupies residues 271-290; sequence EPWREDAENGPSRKKLKQET. Lysine 318 is a binding site for DNA. The disordered stretch occupies residues 398–420; the sequence is RDESNDKNTTSAKKKKQQQKKKK. Over residues 409–420 the composition is skewed to basic residues; the sequence is AKKKKQQQKKKK.

This sequence belongs to the cclA family. Component of the Set1C/COMPASS complex which consists of SET1(2), BRE2(2), SPP1(2), SDC1(1), SHG1(1), SWD1(1), SWD2(1), and SWD3(1). Interacts directly with SDC1.

The protein localises to the nucleus. Its subcellular location is the chromosome. It localises to the telomere. In terms of biological role, component of the Set1C/COMPASS complex that specifically mono-, di- and trimethylates histone H3 to form H3K4me1/2/3, which subsequently plays a role in telomere length maintenance and transcription elongation regulation. COMPASS recognizes ubiquitinated H2B on one face of the nucleosome which stimulates the methylation of H3 on the opposing face. The sequence is that of COMPASS component BRE2 from Saccharomyces cerevisiae (strain ATCC 204508 / S288c) (Baker's yeast).